Here is a 496-residue protein sequence, read N- to C-terminus: Probable cytosol aminopeptidase (496 aa).

Positions 267 and 272 each coordinate Mn(2+). Lysine 279 is a catalytic residue. Residues aspartate 290, aspartate 349, and glutamate 351 each coordinate Mn(2+). Residue arginine 353 is part of the active site.

The protein belongs to the peptidase M17 family. The cofactor is Mn(2+).

It is found in the cytoplasm. The catalysed reaction is Release of an N-terminal amino acid, Xaa-|-Yaa-, in which Xaa is preferably Leu, but may be other amino acids including Pro although not Arg or Lys, and Yaa may be Pro. Amino acid amides and methyl esters are also readily hydrolyzed, but rates on arylamides are exceedingly low.. It carries out the reaction Release of an N-terminal amino acid, preferentially leucine, but not glutamic or aspartic acids.. Its function is as follows. Presumably involved in the processing and regular turnover of intracellular proteins. Catalyzes the removal of unsubstituted N-terminal amino acids from various peptides. The protein is Probable cytosol aminopeptidase of Methylobacillus flagellatus (strain ATCC 51484 / DSM 6875 / VKM B-1610 / KT).